Reading from the N-terminus, the 21-residue chain is Cupiennin-6a (21 aa).

Ser-21 bears the Serine amide mark.

Expressed by the venom gland.

The protein resides in the secreted. The protein is Cupiennin-6a of Cupiennius salei (American wandering spider).